The primary structure comprises 229 residues: Large ribosomal subunit protein uL1 (229 aa).

Belongs to the universal ribosomal protein uL1 family. As to quaternary structure, part of the 50S ribosomal subunit.

Functionally, binds directly to 23S rRNA. The L1 stalk is quite mobile in the ribosome, and is involved in E site tRNA release. Protein L1 is also a translational repressor protein, it controls the translation of the L11 operon by binding to its mRNA. This chain is Large ribosomal subunit protein uL1, found in Listeria monocytogenes serovar 1/2a (strain ATCC BAA-679 / EGD-e).